The sequence spans 419 residues: MNKHQKPVLTGQRFKTRKRDEKEKFEPTVFRDTLVQGLNEAGDDLEAVAKFLDSTGSRLDYRRYADTLFDILVAGSMLAPGGTRIDDGDKTKMTNHCVFSANEDHETIRNYAQVFNKLIRRYKYLEKAFEDEMKKLLLFLKAFSEAEQTKLAMLSGILLGNGTLPATILTSLFTDSLVKEGIAASFAVKLFKAWMAEKDANSVTSSLRKANLDKRLLELFPVNRQSVDHFAKYFTDAGLKELSDFLRVQQSLGTRKELQKELQERLSQECPIKEVVLYVKEEMKRNDLPETAVIGLLWTCIMNAVEWNKKEELVAEQALKHLKQYAPLLAVFSSQGQSELVLLQKVQEYCYDNIHFMKAFQKIVVLFYKADVLSEEAILKWYKEAHAAKGKSVFLDQMKKFVEWLQNAEEESESEGEES.

The interval 1–22 (MNKHQKPVLTGQRFKTRKRDEK) is disordered. N6-acetyllysine is present on K117. The 168-residue stretch at 248 to 415 (VQQSLGTRKE…QNAEEESESE (168 aa)) folds into the W2 domain. 3 positions are modified to phosphoserine: S412, S414, and S419.

This sequence belongs to the BZW family. In terms of assembly, interacts with EIF3E, EIF2S2 and EIF3C.

It localises to the cytoplasm. Translation initiation regulator which represses non-AUG initiated translation and repeat-associated non-AUG (RAN) initiated translation by acting as a competitive inhibitor of eukaryotic translation initiation factor 5 (EIF5) function. Increases the accuracy of translation initiation by impeding EIF5-dependent translation from non-AUG codons by competing with it for interaction with EIF2S2 within the 43S pre-initiation complex (PIC) in an EIF3C-binding dependent manner. The sequence is that of eIF5-mimic protein 1 (Bzw2) from Mus musculus (Mouse).